Here is a 133-residue protein sequence, read N- to C-terminus: Putative pre-16S rRNA nuclease (133 aa).

The protein belongs to the YqgF nuclease family.

It is found in the cytoplasm. In terms of biological role, could be a nuclease involved in processing of the 5'-end of pre-16S rRNA. The chain is Putative pre-16S rRNA nuclease from Dehalococcoides mccartyi (strain ATCC BAA-2266 / KCTC 15142 / 195) (Dehalococcoides ethenogenes (strain 195)).